Consider the following 662-residue polypeptide: Probable actin-related protein 8 (662 aa).

Basic and acidic residues-rich tracts occupy residues 50–59 and 67–77; these read AGEKDAKETE and TKQDDSKKSQV. The segment at 50–92 is disordered; the sequence is AGEKDAKETESESANGDTKQDDSKKSQVEEEEDGIEESELGEE. Residues 78–89 are compositionally biased toward acidic residues; that stretch reads EEEEDGIEESEL. 339–342 is a binding site for ATP; it reads DMGA.

This sequence belongs to the actin family. In terms of assembly, component of the chromatin remodeling Ino80 complex. Exists as monomers and dimers, but the dimer is most probably the biologically relevant form required for stable interactions with histones that exploits the twofold symmetry of the nucleosome core.

It localises to the nucleus. In terms of biological role, probably involved in transcription regulation via its interaction with the INO80 complex, a chromatin remodeling complex. Exhibits low basal ATPase activity, and unable to polymerize. Strongly prefer nucleosomes and H3-H4 tetramers over H2A-H2B dimers, suggesting it may act as a nucleosome recognition module within the complex. This Schizosaccharomyces pombe (strain 972 / ATCC 24843) (Fission yeast) protein is Probable actin-related protein 8.